The sequence spans 877 residues: Alanine--tRNA ligase (877 aa).

The Zn(2+) site is built by histidine 556, histidine 560, cysteine 657, and histidine 661.

This sequence belongs to the class-II aminoacyl-tRNA synthetase family. The cofactor is Zn(2+).

It is found in the cytoplasm. The enzyme catalyses tRNA(Ala) + L-alanine + ATP = L-alanyl-tRNA(Ala) + AMP + diphosphate. Catalyzes the attachment of alanine to tRNA(Ala) in a two-step reaction: alanine is first activated by ATP to form Ala-AMP and then transferred to the acceptor end of tRNA(Ala). Also edits incorrectly charged Ser-tRNA(Ala) and Gly-tRNA(Ala) via its editing domain. The polypeptide is Alanine--tRNA ligase (Wolbachia pipientis wMel).